Reading from the N-terminus, the 771-residue chain is Tetratricopeptide repeat-containing protein trd-1 (771 aa).

TPR repeat units lie at residues 389-415, 416-449, 451-484, 485-518, 520-552, and 553-586; these read LEMW…IRRL, IEQK…SDDR, ARAH…QPIQ, LGTW…QPDH, EAWN…NYEH, and PNVW…NKRG.

This sequence belongs to the TTC27 family. In terms of tissue distribution, expressed in the spermatheca.

The protein localises to the cytoplasm. Functionally, developmental protein required for cell fate determination in both the germline and seam cells of the developing epidermis. Specifically, involved in sex determination and may function in parallel or downstream of other sex determination factors, including tra-2 and fem-3, to promote oogenesis in its role in the regulation of the switch from spermatogenesis to oogenesis in the gonads. Also implicated in the mitosis to meiosis switch in distal tip cells. The protein is Tetratricopeptide repeat-containing protein trd-1 of Caenorhabditis elegans.